A 467-amino-acid polypeptide reads, in one-letter code: Major capsid protein (467 aa).

It belongs to the NCLDV major capsid protein family. As to quaternary structure, homotrimer.

It is found in the virion. In terms of biological role, major capsid protein that self assembles to form an icosahedral capsid with a T=147 symmetry. Represents around 50% of the total virion protein mass. This Invertebrate iridescent virus 6 (IIV-6) protein is Major capsid protein (MCP).